The primary structure comprises 292 residues: Phosphatidylserine decarboxylase proenzyme (292 aa).

Active-site charge relay system; for autoendoproteolytic cleavage activity residues include D92, H149, and S256. Catalysis depends on S256, which acts as the Schiff-base intermediate with substrate; via pyruvic acid; for decarboxylase activity. Position 256 is a pyruvic acid (Ser); by autocatalysis (S256).

It belongs to the phosphatidylserine decarboxylase family. PSD-B subfamily. Prokaryotic type I sub-subfamily. As to quaternary structure, heterodimer of a large membrane-associated beta subunit and a small pyruvoyl-containing alpha subunit. Pyruvate serves as cofactor. Post-translationally, is synthesized initially as an inactive proenzyme. Formation of the active enzyme involves a self-maturation process in which the active site pyruvoyl group is generated from an internal serine residue via an autocatalytic post-translational modification. Two non-identical subunits are generated from the proenzyme in this reaction, and the pyruvate is formed at the N-terminus of the alpha chain, which is derived from the carboxyl end of the proenzyme. The autoendoproteolytic cleavage occurs by a canonical serine protease mechanism, in which the side chain hydroxyl group of the serine supplies its oxygen atom to form the C-terminus of the beta chain, while the remainder of the serine residue undergoes an oxidative deamination to produce ammonia and the pyruvoyl prosthetic group on the alpha chain. During this reaction, the Ser that is part of the protease active site of the proenzyme becomes the pyruvoyl prosthetic group, which constitutes an essential element of the active site of the mature decarboxylase.

The protein resides in the cell membrane. It catalyses the reaction a 1,2-diacyl-sn-glycero-3-phospho-L-serine + H(+) = a 1,2-diacyl-sn-glycero-3-phosphoethanolamine + CO2. The protein operates within phospholipid metabolism; phosphatidylethanolamine biosynthesis; phosphatidylethanolamine from CDP-diacylglycerol: step 2/2. Its function is as follows. Catalyzes the formation of phosphatidylethanolamine (PtdEtn) from phosphatidylserine (PtdSer). The polypeptide is Phosphatidylserine decarboxylase proenzyme (Baumannia cicadellinicola subsp. Homalodisca coagulata).